A 727-amino-acid chain; its full sequence is Kinesin-like protein KIN-14G (727 aa).

3 disordered regions span residues 100 to 156, 172 to 194, and 336 to 357; these read QTAP…LHLR, HLSA…SCSR, and LAGG…GATR. Over residues 114–133 the composition is skewed to polar residues; the sequence is VASSTAGRASRTKSASSTGR. A Kinesin motor domain is found at 381-710; the sequence is NIRVFCRVRP…LRFAARVNSC (330 aa). 461 to 468 provides a ligand contact to ATP; sequence GQTGSGKT.

It belongs to the TRAFAC class myosin-kinesin ATPase superfamily. Kinesin family. KIN-14 subfamily.

This chain is Kinesin-like protein KIN-14G, found in Oryza sativa subsp. japonica (Rice).